The sequence spans 185 residues: Threonylcarbamoyl-AMP synthase (185 aa).

Positions 3–185 (EQAPDEVQEI…VDAISGKVLR (183 aa)) constitute a YrdC-like domain.

This sequence belongs to the SUA5 family. TsaC subfamily.

It is found in the cytoplasm. The catalysed reaction is L-threonine + hydrogencarbonate + ATP = L-threonylcarbamoyladenylate + diphosphate + H2O. In terms of biological role, required for the formation of a threonylcarbamoyl group on adenosine at position 37 (t(6)A37) in tRNAs that read codons beginning with adenine. Catalyzes the conversion of L-threonine, HCO(3)(-)/CO(2) and ATP to give threonylcarbamoyl-AMP (TC-AMP) as the acyladenylate intermediate, with the release of diphosphate. This is Threonylcarbamoyl-AMP synthase from Shewanella sediminis (strain HAW-EB3).